The primary structure comprises 91 residues: Small ribosomal subunit protein uS19 (91 aa).

It belongs to the universal ribosomal protein uS19 family.

In terms of biological role, protein S19 forms a complex with S13 that binds strongly to the 16S ribosomal RNA. In Synechococcus sp. (strain WH7803), this protein is Small ribosomal subunit protein uS19.